Consider the following 284-residue polypeptide: uncharacterized protein (284 aa).

The signal sequence occupies residues 1 to 20 (MLHNIQSILQFLLFVSSVQA). The Apple domain occupies 38 to 121 (CFEFKKNYWI…FTVNFFRNIC (84 aa)). Intrachain disulfides connect Cys-38/Cys-121, Cys-63/Cys-89, and Cys-67/Cys-77. N-linked (GlcNAc...) asparagine glycosylation occurs at Asn-256. Residues 264–284 (SSTGLKFTTGLLIILVVFLFL) traverse the membrane as a helical segment.

Its subcellular location is the membrane. This is an uncharacterized protein from Caenorhabditis elegans.